The sequence spans 300 residues: MKKSALEKLLSLIENLTNQEFKQATNSLISFIYKLNRNEVIELVRSIGILPEAIKPSSTQEKLFSKAGDIVLAKAFQLLNLNSKPLEQRGNAGDVIALSKEFNYGLVADAKSFRLSRTAKNQKDFKVKALSEWREDKDYAVLTAPFFQYPTTKSQIFKQSLDENVLLFSWEHLAILLQLDLEETNIFSFEQLWNFPKKQSKKTSVSDAENNFMRDFNKYFMDLFKIDKDTLNQLLQKEINFIEERSLIEKEYWKKQINIIKNFTREEAIEALLKDINMSSKIETIDSFIKGIKSNDRLYL.

It carries out the reaction Endonucleolytic cleavage of DNA to give specific double-stranded fragments with terminal 5'-phosphates.. In terms of biological role, a P subtype restriction enzyme that recognizes the double-stranded sequence 5'-AAGCTT-3' and cleaves after A-1. This Haemophilus influenzae (strain ATCC 51907 / DSM 11121 / KW20 / Rd) protein is Type II restriction enzyme HindIII.